The primary structure comprises 395 residues: WW domain-containing transcription regulator protein 1 (395 aa).

Lys-46 participates in a covalent cross-link: Glycyl lysine isopeptide (Lys-Gly) (interchain with G-Cter in ubiquitin). A disordered region spans residues 52–116 (FFKEPDSGSH…AQQHAHLRQQ (65 aa)). Residues 61-70 (HSRQSSTDSS) show a composition bias toward polar residues. Ser-62 carries the phosphoserine modification. Ser-89 carries the phosphoserine; by LATS2 modification. Residues 124 to 157 (LPLPPGWEMTFTATGQRYFLNHIEKITTWQDPRK) form the WW domain. The segment at 221–395 (PNALTTQQQQ…NKSEPFLTWL (175 aa)) is required for interaction with PALS1. Positions 224 to 258 (LTTQQQQQQKLRLQRIQMERERIRMRQEELMRQEA) form a coiled coil. Positions 277-293 (PAMSTDMRSVTNSSSDP) are enriched in polar residues. Residues 277–308 (PAMSTDMRSVTNSSSDPFLNGGPYHSREQSTD) are disordered. Phosphoserine is present on Ser-290. Phosphoserine; by LATS2 is present on Ser-306. Positions 389–395 (EPFLTWL) match the PDZ-binding motif.

As to quaternary structure, binds to SLC9A3R2 via the PDZ motif at the plasma membrane. Binds to YWHAZ in vivo and in vitro through the phosphoserine-binding motif RSHSSP. Interacts (via coiled-coil domain) with SMAD2 (via MH1 domain), SMAD3 and SMAD4. Interacts with MED15. Interacts with PAX8 and NKX2-1. Interacts with TEAD1, TEAD2, TEAD3 and TEAD4. Interacts (via WW domain) with PALS1. Interacts with LATS1. Interacts with YAP1 (when phosphorylated at 'Ser-112'). Interacts (via WW domain) with PRRG4 (via cytoplasmic domain). Interacts (via WW domain) with AMOTL2 (via PPXY motif); the interaction promotes WWTR1/TAZ localization to the cytoplasm and tight junctions, thereby inhibiting its transcriptional coactivator properties. Interacts (via WW domain) with AMOT; the interaction facilitates translocation of WWTR1/TAZ to the cytoplasm. Post-translationally, phosphorylated by LATS2 and STK3/MST2. Phosphorylation by LATS2 results in creation of 14-3-3 binding sites, retention in the cytoplasm, and functional inactivation. Phosphorylation results in the inhibition of transcriptional coactivation through YWHAZ-mediated nuclear export. In terms of processing, ubiquitinated at Lys-46; leading to proteasomal degradation. Deubiquitinated and stabilized by UCHL1 at Lys-46; leading to inhibition of osteoclastogenesis. As to expression, highly expressed in kidney, heart, placenta and lung.

It is found in the nucleus. The protein resides in the cytoplasm. The protein localises to the cell membrane. Its subcellular location is the cell junction. It localises to the tight junction. In terms of biological role, transcriptional coactivator which acts as a downstream regulatory target in the Hippo signaling pathway that plays a pivotal role in organ size control and tumor suppression by restricting proliferation and promoting apoptosis. The core of this pathway is composed of a kinase cascade wherein STK3/MST2 and STK4/MST1, in complex with its regulatory protein SAV1, phosphorylates and activates LATS1/2 in complex with its regulatory protein MOB1, which in turn phosphorylates and inactivates YAP1 oncoprotein and WWTR1/TAZ. WWTR1 enhances PAX8 and NKX2-1/TTF1-dependent gene activation. In conjunction with YAP1, involved in the regulation of TGFB1-dependent SMAD2 and SMAD3 nuclear accumulation. Plays a key role in coupling SMADs to the transcriptional machinery such as the mediator complex. Regulates embryonic stem-cell self-renewal, promotes cell proliferation and epithelial-mesenchymal transition. The sequence is that of WW domain-containing transcription regulator protein 1 from Mus musculus (Mouse).